A 324-amino-acid chain; its full sequence is tRNA pseudouridine synthase B (324 aa).

Catalysis depends on Asp-49, which acts as the Nucleophile. Positions 87-107 are disordered; sequence RSTDDLEGQPTKTSDKRPSRE.

It belongs to the pseudouridine synthase TruB family. Type 1 subfamily.

The catalysed reaction is uridine(55) in tRNA = pseudouridine(55) in tRNA. In terms of biological role, responsible for synthesis of pseudouridine from uracil-55 in the psi GC loop of transfer RNAs. The chain is tRNA pseudouridine synthase B from Brucella abortus (strain 2308).